We begin with the raw amino-acid sequence, 171 residues long: Peptide methionine sulfoxide reductase MsrA (171 aa).

Cys-13 is an active-site residue.

Belongs to the MsrA Met sulfoxide reductase family.

The enzyme catalyses L-methionyl-[protein] + [thioredoxin]-disulfide + H2O = L-methionyl-(S)-S-oxide-[protein] + [thioredoxin]-dithiol. It carries out the reaction [thioredoxin]-disulfide + L-methionine + H2O = L-methionine (S)-S-oxide + [thioredoxin]-dithiol. Has an important function as a repair enzyme for proteins that have been inactivated by oxidation. Catalyzes the reversible oxidation-reduction of methionine sulfoxide in proteins to methionine. This Mycobacterium sp. (strain JLS) protein is Peptide methionine sulfoxide reductase MsrA.